The following is a 491-amino-acid chain: Nucleoside transporter 1.1 (491 aa).

Helical transmembrane passes span 27–47 (FYVYVVAFMCGVSMMMPVNAV), 82–102 (YNLIGIVTSLIMEPLTLLSWF), 109–129 (VRLLGGLVILIVEIIVLMVVP), 136–156 (AGAVATICCTGFIGGFGKSIF), 173–193 (STMMGGVGMSGVLTSLLQIIV), and 209–229 (KIYYGLDVGIQGMTFVALILL). Over residues 260 to 273 (CHTDEHPTHDKEGR) the composition is skewed to basic and acidic residues. 2 disordered regions span residues 260 to 280 (CHTDEHPTHDKEGRNSSSGKE) and 290 to 309 (AAAKSEGPDAVEESSWPHEV). Residue Asn274 is glycosylated (N-linked (GlcNAc...) asparagine). A run of 5 helical transmembrane segments spans residues 333 to 353 (MFVACAFNFLITLFLFPGIAV), 361 to 381 (WFSTIAVFIFNVFDVLGRFSP), 395 to 415 (WIIVAASFARVIFVPLLLLHS), 427 to 447 (VMEVIFGFSNGYVGSMALVLG), and 460 to 480 (FVAGTLMGISILVGGTIGTVL).

Belongs to the SLC29A/ENT transporter (TC 2.A.57) family.

Its subcellular location is the membrane. It carries out the reaction adenosine(in) + H(+)(in) = adenosine(out) + H(+)(out). It catalyses the reaction uridine(in) + H(+)(in) = uridine(out) + H(+)(out). Its function is as follows. Sodium-independent high affinity nucleoside:H(+) symporter; transports adenosine and uridine. Can transport cytidine and thymidine. This chain is Nucleoside transporter 1.1, found in Leishmania donovani.